The chain runs to 680 residues: DNA-directed RNA polymerase subunit beta' (680 aa).

Residues Cys-68, Cys-70, Cys-86, and Cys-89 each coordinate Zn(2+). Residues Asp-488, Asp-490, and Asp-492 each contribute to the Mg(2+) site.

It belongs to the RNA polymerase beta' chain family. RpoC1 subfamily. In plastids the minimal PEP RNA polymerase catalytic core is composed of four subunits: alpha, beta, beta', and beta''. When a (nuclear-encoded) sigma factor is associated with the core the holoenzyme is formed, which can initiate transcription. Mg(2+) serves as cofactor. Zn(2+) is required as a cofactor.

It is found in the plastid. It localises to the chloroplast. The enzyme catalyses RNA(n) + a ribonucleoside 5'-triphosphate = RNA(n+1) + diphosphate. Its function is as follows. DNA-dependent RNA polymerase catalyzes the transcription of DNA into RNA using the four ribonucleoside triphosphates as substrates. The polypeptide is DNA-directed RNA polymerase subunit beta' (Nicotiana tabacum (Common tobacco)).